Consider the following 424-residue polypeptide: Enolase (424 aa).

Q162 provides a ligand contact to (2R)-2-phosphoglycerate. E204 acts as the Proton donor in catalysis. 3 residues coordinate Mg(2+): D241, E284, and D311. 4 residues coordinate (2R)-2-phosphoglycerate: K336, R365, S366, and K387. The active-site Proton acceptor is the K336.

It belongs to the enolase family. Mg(2+) is required as a cofactor.

It localises to the cytoplasm. Its subcellular location is the secreted. The protein localises to the cell surface. It carries out the reaction (2R)-2-phosphoglycerate = phosphoenolpyruvate + H2O. The protein operates within carbohydrate degradation; glycolysis; pyruvate from D-glyceraldehyde 3-phosphate: step 4/5. Its function is as follows. Catalyzes the reversible conversion of 2-phosphoglycerate (2-PG) into phosphoenolpyruvate (PEP). It is essential for the degradation of carbohydrates via glycolysis. The protein is Enolase of Sinorhizobium medicae (strain WSM419) (Ensifer medicae).